A 520-amino-acid polypeptide reads, in one-letter code: Dynein axonemal assembly factor 8 (520 aa).

4 disordered regions span residues proline 93 to glutamate 202, arginine 217 to proline 256, cysteine 328 to glutamine 366, and aspartate 388 to leucine 520. Residues arginine 111–arginine 125 are compositionally biased toward basic and acidic residues. Position 161 is a phosphoserine (serine 161). At serine 351 the chain carries Phosphoserine. A compositionally biased stretch (acidic residues) spans aspartate 401–methionine 410. The segment covering serine 420–glutamine 437 has biased composition (polar residues).

In terms of tissue distribution, expressed in respiratory ciliated cells (at protein level).

It localises to the dynein axonemal particle. The protein resides in the cytoplasm. Its function is as follows. In cyliated cells, dynein axonemal particle-specific protein required for deployment of ODA to the axoneme. Interacts with outer dynein arm (ODA) subunits. This chain is Dynein axonemal assembly factor 8, found in Homo sapiens (Human).